Here is a 123-residue protein sequence, read N- to C-terminus: Large ribosomal subunit protein bL12 (123 aa).

The protein belongs to the bacterial ribosomal protein bL12 family. In terms of assembly, homodimer. Part of the ribosomal stalk of the 50S ribosomal subunit. Forms a multimeric L10(L12)X complex, where L10 forms an elongated spine to which 2 to 4 L12 dimers bind in a sequential fashion. Binds GTP-bound translation factors.

Functionally, forms part of the ribosomal stalk which helps the ribosome interact with GTP-bound translation factors. Is thus essential for accurate translation. This chain is Large ribosomal subunit protein bL12, found in Rhodopseudomonas palustris (strain HaA2).